A 229-amino-acid chain; its full sequence is UPF0441 protein YE3666 (229 aa).

Disordered regions lie at residues 101 to 125 (PAQA…QQSG) and 190 to 229 (KPAV…SMGG). 2 stretches are compositionally biased toward low complexity: residues 109 to 120 (TSSSSSETTAAA) and 214 to 229 (RSAA…SMGG).

Belongs to the UPF0441 family.

The chain is UPF0441 protein YE3666 from Yersinia enterocolitica serotype O:8 / biotype 1B (strain NCTC 13174 / 8081).